The chain runs to 56 residues: Hemolymph trypsin inhibitor A (56 aa).

In terms of domain architecture, BPTI/Kunitz inhibitor spans 22 to 56; it reads CFLPLEVGVCRALFFRYGYDPAIKACXEFMYGGCQ. A disulfide bond links Cys31 and Cys55.

Its function is as follows. Inhibits trypsin. In Manduca sexta (Tobacco hawkmoth), this protein is Hemolymph trypsin inhibitor A.